A 280-amino-acid chain; its full sequence is Apoptosis regulator ced-9 (280 aa).

Positions 33–59 (GTEPTDFGINSDAQDLPSPSRQASTRR) are disordered. Over residues 43-59 (SDAQDLPSPSRQASTRR) the composition is skewed to polar residues. The short motif at 80–99 (IEGFVVDYFTHRIRQNGMEW) is the BH4 element. A BH1 motif is present at residues 160 to 179 (QTDQCPMSYGRLIGLISFGG). A BH2 motif is present at residues 213 to 229 (NWKEHNRSWDDFMTLGK).

The protein belongs to the Bcl-2 family. As to quaternary structure, interacts with asymmetric homodimer ced-4; the interaction sequesters ced-4. Interacts with egl-1; the interaction results in ced-4 release. Interacts with dre-1; the interaction inhibits ced-9 activity, either directly or indirectly. Interacts with dct-1. May form a complex composed of ced-9, ced-4 and mac-1. Interacts with dynamin-related protein drp-1 (via residues 280-502); the interaction is enhanced by GTP rather than GDP; the interaction is probably direct and may occur at the mitochondrion. Interaction with drp-1 may be enhanced by interaction of ced-9 with egl-1, but not with ced-4. A ced-9/egl-1 complex may recruit drp-1 to the mitochondrial surface. Interacts with fzo-1; interaction may be suppressed by interaction of ced-9 with egl-1.

The protein localises to the perikaryon. Its subcellular location is the synapse. It is found in the endomembrane system. The protein resides in the mitochondrion membrane. It localises to the cytoplasm. In terms of biological role, plays a major role in programmed cell death (PCD, apoptosis). egl-1 binds to and directly inhibits the activity of ced-9, releasing the cell death activator ced-4 from a ced-9/ced-4 containing protein complex and allowing ced-4 to activate the cell-killing caspase ced-3. During larval development, required for the elimination of transient presynaptic components downstream of egl-1 and upstream of ced-4 and ced-3 apoptotic pathway. Has been shown in one study to be dispensable in mitochondrial dynamics and morphology during early embryonic development. However, another study shows that a egl-1/ced-9 containing complex may promote drp-1-dependent mitochondrial fission. The protein is Apoptosis regulator ced-9 (ced-9) of Caenorhabditis elegans.